The following is a 200-amino-acid chain: Glycerol-3-phosphate acyltransferase (200 aa).

5 consecutive transmembrane segments (helical) span residues F2–V22, K51–A71, A84–F104, L114–V134, and L158–L178.

The protein belongs to the PlsY family. In terms of assembly, probably interacts with PlsX.

It localises to the cell inner membrane. It catalyses the reaction an acyl phosphate + sn-glycerol 3-phosphate = a 1-acyl-sn-glycero-3-phosphate + phosphate. The protein operates within lipid metabolism; phospholipid metabolism. Its function is as follows. Catalyzes the transfer of an acyl group from acyl-phosphate (acyl-PO(4)) to glycerol-3-phosphate (G3P) to form lysophosphatidic acid (LPA). This enzyme utilizes acyl-phosphate as fatty acyl donor, but not acyl-CoA or acyl-ACP. This Neisseria meningitidis serogroup A / serotype 4A (strain DSM 15465 / Z2491) protein is Glycerol-3-phosphate acyltransferase.